The following is a 76-amino-acid chain: DNA-directed RNA polymerase subunit epsilon (76 aa).

The protein belongs to the RNA polymerase subunit epsilon family. In terms of assembly, RNAP is composed of a core of 2 alpha, a beta and a beta' subunit. The core is associated with a delta subunit, and at least one of epsilon or omega. When a sigma factor is associated with the core the holoenzyme is formed, which can initiate transcription.

It carries out the reaction RNA(n) + a ribonucleoside 5'-triphosphate = RNA(n+1) + diphosphate. In terms of biological role, a non-essential component of RNA polymerase (RNAP). The protein is DNA-directed RNA polymerase subunit epsilon of Lactococcus lactis subsp. lactis (strain IL1403) (Streptococcus lactis).